Consider the following 89-residue polypeptide: Small ribosomal subunit protein bS20 (89 aa).

Residues 1–12 (MANIKSAKKRAK) show a composition bias toward basic residues. The interval 1 to 24 (MANIKSAKKRAKQTVVRNERNTGQ) is disordered.

Belongs to the bacterial ribosomal protein bS20 family.

Its function is as follows. Binds directly to 16S ribosomal RNA. The chain is Small ribosomal subunit protein bS20 from Xanthomonas campestris pv. campestris (strain 8004).